Consider the following 276-residue polypeptide: Large ribosomal subunit protein uL2 (276 aa).

The disordered stretch occupies residues 225–276; sequence VMNPVDHPHGGGEGKTAAGRDPVSPWGTPTKGYRTRSNKRTDSMIVQKRHKR.

Belongs to the universal ribosomal protein uL2 family. As to quaternary structure, part of the 50S ribosomal subunit. Forms a bridge to the 30S subunit in the 70S ribosome.

In terms of biological role, one of the primary rRNA binding proteins. Required for association of the 30S and 50S subunits to form the 70S ribosome, for tRNA binding and peptide bond formation. It has been suggested to have peptidyltransferase activity; this is somewhat controversial. Makes several contacts with the 16S rRNA in the 70S ribosome. The chain is Large ribosomal subunit protein uL2 from Cupriavidus taiwanensis (strain DSM 17343 / BCRC 17206 / CCUG 44338 / CIP 107171 / LMG 19424 / R1) (Ralstonia taiwanensis (strain LMG 19424)).